The primary structure comprises 185 residues: MATALGFRCLYRTRPATLGRYVDRLWRSPSRGHRLSPADDELYQRTRISLLQNEFPQAVYIDSYNSRGFTINGNRVFGPCALLPQTVVQWNVGSHQDITEESFSIFWMLEPRIEIVVVGTGNKTERLHSQVLQAMRQRGIAVEIQDTPNACATFNFLCHEGRVTGAALIPPPGETALASSGQTTE.

This sequence belongs to the NDUFAF3 family. Interacts with NDUFAF4, NDUFS2 and NDUFS3. In terms of tissue distribution, expressed in testis.

Its subcellular location is the mitochondrion inner membrane. The protein resides in the nucleus. In terms of biological role, essential factor for the assembly of mitochondrial NADH:ubiquinone oxidoreductase complex (complex I). This chain is NADH dehydrogenase [ubiquinone] 1 alpha subcomplex assembly factor 3 (Ndufaf3), found in Rattus norvegicus (Rat).